The sequence spans 123 residues: Small ribosomal subunit protein bS18 (123 aa).

Residues 1–10 show a composition bias toward polar residues; the sequence is MADETTVSTP. The interval 1–52 is disordered; it reads MADETTVSTPAASGTETPSTGGGGAPQGRPQGGPRGDRGPRPGGSGRDGGRK. Residues 20–34 are compositionally biased toward gly residues; it reads TGGGGAPQGRPQGGP.

Belongs to the bacterial ribosomal protein bS18 family. Part of the 30S ribosomal subunit. Forms a tight heterodimer with protein bS6.

Its function is as follows. Binds as a heterodimer with protein bS6 to the central domain of the 16S rRNA, where it helps stabilize the platform of the 30S subunit. In Koribacter versatilis (strain Ellin345), this protein is Small ribosomal subunit protein bS18.